We begin with the raw amino-acid sequence, 278 residues long: Ankyrin repeat and SOCS box protein 13 (278 aa).

ANK repeat units lie at residues 18–47 (VERTPVHEAAQRGESLQLQQLIDSGACVNQ), 51–80 (DSITPLHAASLQGQAQCVQLLLAAGAQVDA), 84–113 (DGSTPLCDACASGSIECVKLLLSYGAKVNP), 116–145 (YTASPLHEACMSGSSECVRLLIDVGANLEA), 149–178 (HFGTPLHVACAREHLDCVKVLLNAGANVNA), and 181–210 (LHETALHHAAKVKNVDLIEMLIEFGGNIYA). In terms of domain architecture, SOCS box spans 229-278 (AKCFEYYEKTPLSLSQLCRVSLRKATGVRGLEKVAKLNIPPRLIDYLSYN).

The protein belongs to the ankyrin SOCS box (ASB) family.

It functions in the pathway protein modification; protein ubiquitination. Its function is as follows. May be a substrate-recognition component of a SCF-like ECS (Elongin-Cullin-SOCS-box protein) E3 ubiquitin-protein ligase complex which mediates the ubiquitination and subsequent proteasomal degradation of target proteins. The protein is Ankyrin repeat and SOCS box protein 13 (Asb13) of Mus musculus (Mouse).